Consider the following 383-residue polypeptide: tRNA-specific 2-thiouridylase MnmA (383 aa).

ATP contacts are provided by residues 9–16 (GMSGGVDS) and Met-35. Residues 95–97 (NPD) are interaction with target base in tRNA. Residue Cys-100 is the Nucleophile of the active site. Cysteines 100 and 196 form a disulfide. Gly-124 provides a ligand contact to ATP. The segment at 146–148 (KDQ) is interaction with tRNA. Catalysis depends on Cys-196, which acts as the Cysteine persulfide intermediate. The tract at residues 308–309 (RY) is interaction with tRNA.

The protein belongs to the MnmA/TRMU family.

It is found in the cytoplasm. The catalysed reaction is S-sulfanyl-L-cysteinyl-[protein] + uridine(34) in tRNA + AH2 + ATP = 2-thiouridine(34) in tRNA + L-cysteinyl-[protein] + A + AMP + diphosphate + H(+). In terms of biological role, catalyzes the 2-thiolation of uridine at the wobble position (U34) of tRNA, leading to the formation of s(2)U34. The chain is tRNA-specific 2-thiouridylase MnmA from Burkholderia lata (strain ATCC 17760 / DSM 23089 / LMG 22485 / NCIMB 9086 / R18194 / 383).